The sequence spans 310 residues: Glutaminase (310 aa).

Substrate is bound by residues Ser-67, Asn-118, Glu-161, Asn-168, Tyr-192, Tyr-244, and Val-262.

Belongs to the glutaminase family. As to quaternary structure, homotetramer.

It carries out the reaction L-glutamine + H2O = L-glutamate + NH4(+). The sequence is that of Glutaminase from Legionella pneumophila (strain Lens).